A 639-amino-acid chain; its full sequence is Chaperone protein DnaK (639 aa).

A Phosphothreonine; by autocatalysis modification is found at T198. The interval 604-639 (KSQAQGGDNADAGKQANAAADDVVDAEFEEVKDDKK) is disordered. Residues 606–624 (QAQGGDNADAGKQANAAAD) show a composition bias toward low complexity. Residues 625 to 639 (DVVDAEFEEVKDDKK) are compositionally biased toward acidic residues.

Belongs to the heat shock protein 70 family.

Functionally, acts as a chaperone. The chain is Chaperone protein DnaK from Shewanella baltica (strain OS223).